The primary structure comprises 54 residues: Rubredoxin (54 aa).

N-formylmethionine is present on M1. Residues 1-54 form the Rubredoxin-like domain; that stretch reads MKKYTCTVCGYIYNPEDGDPDNGVNPGTDFKDIPDDWVCPLCGVGKDQFEEVEE. Fe cation contacts are provided by C6, C9, C39, and C42.

The protein belongs to the rubredoxin family. It depends on Fe(3+) as a cofactor.

Its function is as follows. Rubredoxin is a small nonheme, iron protein lacking acid-labile sulfide. Its single Fe, chelated to 4 Cys, functions as an electron acceptor and may also stabilize the conformation of the molecule. This is Rubredoxin from Clostridium pasteurianum.